The primary structure comprises 436 residues: Glutamate-1-semialdehyde 2,1-aminomutase 2 (436 aa).

Residue Lys-271 is modified to N6-(pyridoxal phosphate)lysine.

This sequence belongs to the class-III pyridoxal-phosphate-dependent aminotransferase family. HemL subfamily. As to quaternary structure, homodimer. Pyridoxal 5'-phosphate is required as a cofactor.

The protein localises to the cytoplasm. It catalyses the reaction (S)-4-amino-5-oxopentanoate = 5-aminolevulinate. It participates in porphyrin-containing compound metabolism; protoporphyrin-IX biosynthesis; 5-aminolevulinate from L-glutamyl-tRNA(Glu): step 2/2. The polypeptide is Glutamate-1-semialdehyde 2,1-aminomutase 2 (Exiguobacterium sibiricum (strain DSM 17290 / CCUG 55495 / CIP 109462 / JCM 13490 / 255-15)).